The chain runs to 453 residues: Phenylalanine-4-hydroxylase (453 aa).

N-acetylalanine is present on alanine 2. Position 16 is a phosphoserine; by PKA (serine 16). One can recognise an ACT domain in the interval 36–114 (SLIFSLKEEV…TVHELSRDKE (79 aa)). Residues histidine 285, histidine 290, and glutamate 330 each contribute to the Fe cation site.

Belongs to the biopterin-dependent aromatic amino acid hydroxylase family. In terms of assembly, homodimer and homotetramer. Fe(2+) serves as cofactor. Post-translationally, phosphorylation at Ser-16 increases basal activity and facilitates activation by the substrate phenylalanine.

It catalyses the reaction (6R)-L-erythro-5,6,7,8-tetrahydrobiopterin + L-phenylalanine + O2 = (4aS,6R)-4a-hydroxy-L-erythro-5,6,7,8-tetrahydrobiopterin + L-tyrosine. The protein operates within amino-acid degradation; L-phenylalanine degradation; acetoacetate and fumarate from L-phenylalanine: step 1/6. N-terminal region of PAH is thought to contain allosteric binding sites for phenylalanine and to constitute an 'inhibitory' domain that regulates the activity of a catalytic domain in the C-terminal portion of the molecule. In terms of biological role, catalyzes the hydroxylation of L-phenylalanine to L-tyrosine. In Rattus norvegicus (Rat), this protein is Phenylalanine-4-hydroxylase (Pah).